Consider the following 847-residue polypeptide: Leucine--tRNA ligase (847 aa).

Positions 39 to 49 (PYPSGALHMGH) match the 'HIGH' region motif. A 'KMSKS' region motif is present at residues 613–617 (KMSKS). K616 lines the ATP pocket.

Belongs to the class-I aminoacyl-tRNA synthetase family.

Its subcellular location is the cytoplasm. It catalyses the reaction tRNA(Leu) + L-leucine + ATP = L-leucyl-tRNA(Leu) + AMP + diphosphate. In Gloeobacter violaceus (strain ATCC 29082 / PCC 7421), this protein is Leucine--tRNA ligase.